The sequence spans 162 residues: Putative ureidoglycolate lyase (162 aa).

This sequence belongs to the ureidoglycolate lyase family. In terms of assembly, homodimer. Requires Ni(2+) as cofactor.

The enzyme catalyses (S)-ureidoglycolate = urea + glyoxylate. The protein operates within nitrogen metabolism; (S)-allantoin degradation. Its function is as follows. Catalyzes the catabolism of the allantoin degradation intermediate (S)-ureidoglycolate, generating urea and glyoxylate. Involved in the utilization of allantoin as nitrogen source. The chain is Putative ureidoglycolate lyase from Agrobacterium fabrum (strain C58 / ATCC 33970) (Agrobacterium tumefaciens (strain C58)).